The following is a 431-amino-acid chain: Glutamyl-tRNA(Gln) amidotransferase subunit A (431 aa).

Catalysis depends on charge relay system residues lysine 55 and serine 130. The active-site Acyl-ester intermediate is serine 154.

This sequence belongs to the amidase family. GatA subfamily. As to quaternary structure, heterotrimer of A, B and C subunits.

The enzyme catalyses L-glutamyl-tRNA(Gln) + L-glutamine + ATP + H2O = L-glutaminyl-tRNA(Gln) + L-glutamate + ADP + phosphate + H(+). Allows the formation of correctly charged Gln-tRNA(Gln) through the transamidation of misacylated Glu-tRNA(Gln) in organisms which lack glutaminyl-tRNA synthetase. The reaction takes place in the presence of glutamine and ATP through an activated gamma-phospho-Glu-tRNA(Gln). This is Glutamyl-tRNA(Gln) amidotransferase subunit A from Methanococcus vannielii (strain ATCC 35089 / DSM 1224 / JCM 13029 / OCM 148 / SB).